The primary structure comprises 327 residues: Interleukin-12 subunit beta (327 aa).

An N-terminal signal peptide occupies residues 1 to 22; sequence MHPQQLVVSWFSLVLLASPIVA. Residues 23-106 form the Ig-like C2-type domain; it reads IWELEKNVYI…LSRSLLLLHK (84 aa). Cys50 and Cys90 form a disulfide bridge. An N-linked (GlcNAc...) asparagine glycan is attached at Asn223. The region spanning 238-327 is the Fibronectin type-III domain; sequence PPKNLQLRPL…WSEWASVSCS (90 aa).

It belongs to the IL-12B family. In terms of assembly, heterodimer with IL12A; disulfide-linked. The heterodimer is known as interleukin IL-12. Heterodimer with IL23A; disulfide-linked. The heterodimer is known as interleukin IL-23. Also secreted as a monomer. Interacts with NBR1; this interaction promotes IL-12 secretion.

It localises to the secreted. In terms of biological role, cytokine that can act as a growth factor for activated T and NK cells, enhance the lytic activity of NK/lymphokine-activated killer cells, and stimulate the production of IFN-gamma by resting PBMC. The protein is Interleukin-12 subunit beta (IL12B) of Bubalus carabanensis (Swamp type water buffalo).